A 2412-amino-acid chain; its full sequence is Centrosomal protein of 295 kDa (2412 aa).

Residues 1 to 540 are necessary for centriole targeting and microtubule association; it reads MKRKGMNTKL…KQADQPEVCC (540 aa). S13 carries the phosphoserine modification. Coiled-coil stretches lie at residues 63-84, 114-134, 209-273, 489-535, and 563-592; these read AEELRAKWEEAQSQKIQNLEKL, AERKRKAEVRHKEALKVQKNQ, DAHL…DLAR, RRKQ…QADQ, and HQLLQQNRLHKETVETARKRLLEYQTVLKE. 2 disordered regions span residues 600–641 and 739–762; these read SALV…YQPV and LDSQQISSEDSENISSKPSEPSPF. S634 carries the phosphoserine modification. A compositionally biased stretch (polar residues) spans 739-757; it reads LDSQQISSEDSENISSKPS. A coiled-coil region spans residues 811 to 841; it reads AQQGDLRFLQEQLELQKKVLQARQEAREKLL. 4 disordered regions span residues 871-891, 973-1005, 1158-1178, and 1216-1240; these read SASAESGNFQTSSTKSDATVS, DTQSKKIQKQPLPANKKGLLPSQSEVSKAQDGS, LSSPSQVTDWGTSRGSVSVRS, and WVDTEKESFQSSPLTPENPSSQQTG. 3 stretches are compositionally biased toward polar residues: residues 993-1005, 1158-1176, and 1224-1240; these read PSQSEVSKAQDGS, LSSPSQVTDWGTSRGSVSV, and FQSSPLTPENPSSQQTG. Coiled coils occupy residues 1300–1327 and 1448–1493; these read QQDSLKALQEQLATQREAIIHSRQEAHE and QHDD…SKQI. Phosphoserine is present on S1573. 4 disordered regions span residues 1820 to 1895, 1916 to 1937, 2028 to 2048, and 2089 to 2111; these read LAHD…LSSV, ESFSEQTEHLEQESTNKQEETD, DLSSPGTSQEDSDFYQSSESS, and TEGSEQSFQQLRPEFSSQESQHA. Positions 1836-1868 are enriched in basic and acidic residues; sequence SKSHDDNAEAVKVKKSDVEDHAVLSHAVSKEEA. Residues 1885–1895 are compositionally biased toward polar residues; it reads QEISQEPLSSV. Positions 1921–1935 are enriched in basic and acidic residues; that stretch reads QTEHLEQESTNKQEE. The span at 2089–2108 shows a compositional bias: polar residues; that stretch reads TEGSEQSFQQLRPEFSSQES. Residues 2367–2412 form an ALMS motif region; sequence SLQEAFMTRQTLTERSYQRQREIWNKTRLPQTKVSKEKLPTGCTGS.

In terms of assembly, interacts (via ALMS motif) with microtubules; this interaction is direct.

It is found in the cytoplasm. The protein resides in the cytoskeleton. The protein localises to the microtubule organizing center. It localises to the centrosome. Its subcellular location is the centriole. It is found in the spindle. Functionally, centriole-enriched microtubule-binding protein involved in centriole biogenesis. Essential for the generation of the distal portion of new-born centrioles in a CPAP- and CEP120-mediated elongation dependent manner during the cell cycle S/G2 phase after formation of the initiating cartwheel structure. Required for the recruitment of centriolar proteins, such as POC1B, POC5 and CEP135, into the distal portion of centrioles. Also required for centriole-to-centrosome conversion during mitotic progression, but is dispensable for cartwheel removal or centriole disengagement. Binds to and stabilizes centriolar microtubule. May be involved in ciliogenesis. This Mus musculus (Mouse) protein is Centrosomal protein of 295 kDa.